The following is a 276-amino-acid chain: Diaminopimelate epimerase (276 aa).

Substrate-binding residues include N13, Q46, and N66. The Proton donor role is filled by C75. Residues 76-77 (GN), N159, N192, and 210-211 (ER) each bind substrate. C219 acts as the Proton acceptor in catalysis. A substrate-binding site is contributed by 220-221 (GT).

Belongs to the diaminopimelate epimerase family. In terms of assembly, homodimer.

It is found in the cytoplasm. It catalyses the reaction (2S,6S)-2,6-diaminopimelate = meso-2,6-diaminopimelate. The protein operates within amino-acid biosynthesis; L-lysine biosynthesis via DAP pathway; DL-2,6-diaminopimelate from LL-2,6-diaminopimelate: step 1/1. Functionally, catalyzes the stereoinversion of LL-2,6-diaminopimelate (L,L-DAP) to meso-diaminopimelate (meso-DAP), a precursor of L-lysine and an essential component of the bacterial peptidoglycan. This chain is Diaminopimelate epimerase, found in Pseudomonas syringae pv. syringae (strain B728a).